The chain runs to 351 residues: Histidinol-phosphate aminotransferase (351 aa).

Lys-213 bears the N6-(pyridoxal phosphate)lysine mark.

It belongs to the class-II pyridoxal-phosphate-dependent aminotransferase family. Histidinol-phosphate aminotransferase subfamily. As to quaternary structure, homodimer. It depends on pyridoxal 5'-phosphate as a cofactor.

The catalysed reaction is L-histidinol phosphate + 2-oxoglutarate = 3-(imidazol-4-yl)-2-oxopropyl phosphate + L-glutamate. It participates in amino-acid biosynthesis; L-histidine biosynthesis; L-histidine from 5-phospho-alpha-D-ribose 1-diphosphate: step 7/9. This chain is Histidinol-phosphate aminotransferase, found in Clostridium kluyveri (strain NBRC 12016).